The primary structure comprises 160 residues: MSKNKTKKGGDSTIALNKKARHDYFIEDKYEAGLALQGWEVKSLRAGKAHIGDSYVLLQNGEAFLFGATITPLNVASTHVVCDPTRIRKLLLKKSELERLIGLVERQSYTLIPLSMYWSRAWVKVEIGLAKGKKEHDKREDLKEREWQRDKERMMKNKGR.

The tract at residues 133-160 (KKEHDKREDLKEREWQRDKERMMKNKGR) is disordered.

This sequence belongs to the SmpB family.

It is found in the cytoplasm. Functionally, required for rescue of stalled ribosomes mediated by trans-translation. Binds to transfer-messenger RNA (tmRNA), required for stable association of tmRNA with ribosomes. tmRNA and SmpB together mimic tRNA shape, replacing the anticodon stem-loop with SmpB. tmRNA is encoded by the ssrA gene; the 2 termini fold to resemble tRNA(Ala) and it encodes a 'tag peptide', a short internal open reading frame. During trans-translation Ala-aminoacylated tmRNA acts like a tRNA, entering the A-site of stalled ribosomes, displacing the stalled mRNA. The ribosome then switches to translate the ORF on the tmRNA; the nascent peptide is terminated with the 'tag peptide' encoded by the tmRNA and targeted for degradation. The ribosome is freed to recommence translation, which seems to be the essential function of trans-translation. This is SsrA-binding protein from Tolumonas auensis (strain DSM 9187 / NBRC 110442 / TA 4).